The chain runs to 326 residues: Biotin synthase (326 aa).

Positions 41–271 (YHVQLASLLS…EARVRLSAGR (231 aa)) constitute a Radical SAM core domain. [4Fe-4S] cluster-binding residues include cysteine 56, cysteine 60, and cysteine 63. Residues cysteine 102, cysteine 134, cysteine 194, and arginine 266 each coordinate [2Fe-2S] cluster.

Belongs to the radical SAM superfamily. Biotin synthase family. In terms of assembly, homodimer. It depends on [4Fe-4S] cluster as a cofactor. [2Fe-2S] cluster is required as a cofactor.

The enzyme catalyses (4R,5S)-dethiobiotin + (sulfur carrier)-SH + 2 reduced [2Fe-2S]-[ferredoxin] + 2 S-adenosyl-L-methionine = (sulfur carrier)-H + biotin + 2 5'-deoxyadenosine + 2 L-methionine + 2 oxidized [2Fe-2S]-[ferredoxin]. The protein operates within cofactor biosynthesis; biotin biosynthesis; biotin from 7,8-diaminononanoate: step 2/2. Functionally, catalyzes the conversion of dethiobiotin (DTB) to biotin by the insertion of a sulfur atom into dethiobiotin via a radical-based mechanism. The polypeptide is Biotin synthase (Synechococcus sp. (strain RCC307)).